Here is a 155-residue protein sequence, read N- to C-terminus: SsrA-binding protein (155 aa).

The protein belongs to the SmpB family.

It is found in the cytoplasm. Required for rescue of stalled ribosomes mediated by trans-translation. Binds to transfer-messenger RNA (tmRNA), required for stable association of tmRNA with ribosomes. tmRNA and SmpB together mimic tRNA shape, replacing the anticodon stem-loop with SmpB. tmRNA is encoded by the ssrA gene; the 2 termini fold to resemble tRNA(Ala) and it encodes a 'tag peptide', a short internal open reading frame. During trans-translation Ala-aminoacylated tmRNA acts like a tRNA, entering the A-site of stalled ribosomes, displacing the stalled mRNA. The ribosome then switches to translate the ORF on the tmRNA; the nascent peptide is terminated with the 'tag peptide' encoded by the tmRNA and targeted for degradation. The ribosome is freed to recommence translation, which seems to be the essential function of trans-translation. The polypeptide is SsrA-binding protein (Halothermothrix orenii (strain H 168 / OCM 544 / DSM 9562)).